A 174-amino-acid polypeptide reads, in one-letter code: Chromophore lyase CpcS/CpeS 1 (174 aa).

This sequence belongs to the CpcS/CpeS biliprotein lyase family.

Its function is as follows. Covalently attaches a chromophore to Cys residue(s) of phycobiliproteins. This Trichodesmium erythraeum (strain IMS101) protein is Chromophore lyase CpcS/CpeS 1.